A 506-amino-acid chain; its full sequence is ATP synthase subunit alpha, chloroplastic (506 aa).

ATP is bound at residue 170 to 177 (GDRQTGKT). At threonine 257 the chain carries Phosphothreonine.

This sequence belongs to the ATPase alpha/beta chains family. In terms of assembly, F-type ATPases have 2 components, CF(1) - the catalytic core - and CF(0) - the membrane proton channel. CF(1) has five subunits: alpha(3), beta(3), gamma(1), delta(1), epsilon(1). CF(0) has four main subunits: a, b, b' and c.

Its subcellular location is the plastid. The protein localises to the chloroplast thylakoid membrane. It carries out the reaction ATP + H2O + 4 H(+)(in) = ADP + phosphate + 5 H(+)(out). In terms of biological role, produces ATP from ADP in the presence of a proton gradient across the membrane. The alpha chain is a regulatory subunit. The chain is ATP synthase subunit alpha, chloroplastic from Olimarabidopsis pumila (Dwarf rocket).